The following is a 1177-amino-acid chain: Transcription-repair-coupling factor (1177 aa).

Residues 638 to 799 form the Helicase ATP-binding domain; that stretch reads DMERERPMDR…MLGVRDLSVI (162 aa). 651–658 is a binding site for ATP; that stretch reads GDVGYGKT. A DEEQ box motif is present at residues 752 to 755; sequence DEEQ. The 155-residue stretch at 820-974 folds into the Helicase C-terminal domain; the sequence is LVREAIEREL…GFKIAMRDLT (155 aa).

It in the N-terminal section; belongs to the UvrB family. This sequence in the C-terminal section; belongs to the helicase family. RecG subfamily.

The protein localises to the cytoplasm. Functionally, couples transcription and DNA repair by recognizing RNA polymerase (RNAP) stalled at DNA lesions. Mediates ATP-dependent release of RNAP and its truncated transcript from the DNA, and recruitment of nucleotide excision repair machinery to the damaged site. Probably required to repair non-bulky DNA lesions. This is Transcription-repair-coupling factor from Bacillus subtilis (strain 168).